Consider the following 545-residue polypeptide: Leucine-rich repeat LGI family member 2 (545 aa).

The N-terminal stretch at 1 to 28 (MALRRGGCGALGLLLLLLGAACLIPRSA) is a signal peptide. Positions 29–65 (QVRRLARCPATCSCTKESIICVGSSWVPRIVPGDISS) constitute an LRRNT domain. N-linked (GlcNAc...) asparagine glycosylation is present at Asn70. LRR repeat units lie at residues 86–107 (SLQL…AFAG), 110–131 (HLEY…AFRG), and 134–155 (DLTH…VFSD). Positions 167 to 217 (NKFECDCKAKWLYLWLKMTNSTVSDVLCIGPPEYQEKKLNDVTSFDYECTT) constitute an LRRCT domain. A glycan (N-linked (GlcNAc...) asparagine) is linked at Asn186. 7 EAR repeats span residues 219-261 (DFVV…EWDH), 265-307 (NFRS…KYDE), 311-358 (KFVK…KWNS), 360-403 (GFYS…QWNK), 407-450 (KFVP…RWNS), 452-494 (QFVE…QWDK), and 498-540 (LFKK…EHII). N-linked (GlcNAc...) asparagine glycosylation is present at Asn271. Asn402 carries an N-linked (GlcNAc...) asparagine glycan.

As to expression, brain, heart and placenta.

It localises to the secreted. Required for the development of soma-targeting inhibitory GABAergic synapses made by parvalbumin-positive basket cells. The chain is Leucine-rich repeat LGI family member 2 (LGI2) from Homo sapiens (Human).